Consider the following 190-residue polypeptide: Large ribosomal subunit protein bL25 (190 aa).

The protein belongs to the bacterial ribosomal protein bL25 family. CTC subfamily. Part of the 50S ribosomal subunit; part of the 5S rRNA/L5/L18/L25 subcomplex. Contacts the 5S rRNA. Binds to the 5S rRNA independently of L5 and L18.

Functionally, this is one of the proteins that binds to the 5S RNA in the ribosome where it forms part of the central protuberance. This Neisseria meningitidis serogroup A / serotype 4A (strain DSM 15465 / Z2491) protein is Large ribosomal subunit protein bL25.